The following is a 568-amino-acid chain: MNTEILGVAVQIVLMVVLAYPLGRYIARVYKGEKTWSDFMAPIERVIYKICGINPQEEMNWKQFLKALLILNAFWFVWGMVLLVSQGWLPLNPDGNGAQTPDQAFNTCISFMVNCNLQHYSGESGLTYFTQLFVIMLFQFITAATGMAAMAGVMKSMAAKSTQTIGNFWHFLVISCTRILLPLSLVVGFILILQGTPMGFDGRMQLTTLEGQEQMVSQGPTAAIVPIKQLGTNGGGYFGVNSSHPLENPTYLTNMVECWSILIIPMAMVLALGFYTNRRKLGYSIFGVMLFAYLAGVFINVGQEMGGNPRISEMGIAQDHGAMEGKEVRLGAGATALWSVTTTVTSNGSVNGMHDSTMPLSGMVEMLNMQINTWFGGVGVGWLNYYTFIIMAVFISGLMVGRTPEFLGKKVEAREMKIATFVALLHPFVILVFTAISSYVYTHHPDFVESEGGWLNNLGFHGLSEQLYEYTSSAANNGSGFEGLGDNTYFWNWTCGIVLILSRFIPIVGQVAIAGLLAQKKFIPESAGTLKTDTVTFAVMTFAVIFIVAALSFFPVHALSTIAEHLSL.

10 helical membrane passes run 3–23 (TEIL…YPLG), 64–84 (FLKA…VLLV), 133–153 (FVIM…MAGV), 179–199 (ILLP…TPMG), 255–275 (MVEC…LGFY), 281–301 (LGYS…FINV), 375–395 (FGGV…AVFI), 418–438 (IATF…AISS), 497–517 (IVLI…AGLL), and 535–555 (VTFA…SFFP).

The protein belongs to the KdpA family. In terms of assembly, the system is composed of three essential subunits: KdpA, KdpB and KdpC.

It is found in the cell inner membrane. Functionally, part of the high-affinity ATP-driven potassium transport (or Kdp) system, which catalyzes the hydrolysis of ATP coupled with the electrogenic transport of potassium into the cytoplasm. This subunit binds the periplasmic potassium ions and delivers the ions to the membrane domain of KdpB through an intramembrane tunnel. This chain is Potassium-transporting ATPase potassium-binding subunit, found in Bacteroides fragilis (strain ATCC 25285 / DSM 2151 / CCUG 4856 / JCM 11019 / LMG 10263 / NCTC 9343 / Onslow / VPI 2553 / EN-2).